Here is a 257-residue protein sequence, read N- to C-terminus: Imidazole glycerol phosphate synthase subunit HisF (257 aa).

Residues Asp11 and Asp130 contribute to the active site.

It belongs to the HisA/HisF family. As to quaternary structure, heterodimer of HisH and HisF.

The protein resides in the cytoplasm. The catalysed reaction is 5-[(5-phospho-1-deoxy-D-ribulos-1-ylimino)methylamino]-1-(5-phospho-beta-D-ribosyl)imidazole-4-carboxamide + L-glutamine = D-erythro-1-(imidazol-4-yl)glycerol 3-phosphate + 5-amino-1-(5-phospho-beta-D-ribosyl)imidazole-4-carboxamide + L-glutamate + H(+). The protein operates within amino-acid biosynthesis; L-histidine biosynthesis; L-histidine from 5-phospho-alpha-D-ribose 1-diphosphate: step 5/9. Functionally, IGPS catalyzes the conversion of PRFAR and glutamine to IGP, AICAR and glutamate. The HisF subunit catalyzes the cyclization activity that produces IGP and AICAR from PRFAR using the ammonia provided by the HisH subunit. The protein is Imidazole glycerol phosphate synthase subunit HisF of Shewanella putrefaciens (strain CN-32 / ATCC BAA-453).